The following is a 2194-amino-acid chain: MSNSLSLTFTALNNPQINAISNPNARLRPLARVTRCSATCVERKRWLGTKLRSGGGLERIQLWESGGLGRLPKLRVAVKSSFSAVPDKPMGLYDPAFDKDSCGVGFVAELNGQSSRKTVTDALEMLVRMTHRGACGCEANTGDGAGILVALPHGFYQEVVDFQLPPQGNYAVGMFFLPKSDSRRKESKNIFTKVAESLGHKVLGWRSVPTDNTGLGKSAQLTEPVIEQVFLTPSSDSKVDLEKQMYILRKLSMVSITSALNLQSDGITDFYICSLSSRTVIYKGQLTPAQLGEYYYADLGNERFTSYMALIHSRFSTNTFPSWDRAQPFRVLGHNGEINTLRGNVNWIKAREGLLKCKELGLSENDLKKFLPIVDANSSDSGCFDGVLEFLLHSGKSLPEAVMMMIPEAWQNDKNMDPQRKAFYEYYSALMEPWDGPALISFTDGHYLGATLDRNGLRPGRFYVTHSGRVIMASEVGVVDIPPEDVCRKGRLNPGMMLLVDFEKQIVVNDDALKEQYSLARPYGDWLEKQKIELKDIIDSVHESDIVPPTISGVPPLSNDDVDMENMGIQGLLAPLKAFGYSVESLEILLLPMAKDGVEALGSMGNDTPLAVMSNREKLTFEYFKQMFAQVTNPPIDPIREKIVTSMRCMVGPEGDLTETTEEQCHRLSLKGPLLSTKEMEAIKKMNYRGWRSKVIDITYSKERGTKGLEEALDRICTEAHNAISEGYTTLVLSDRAFSKKHVAVSSLLAVGAVHQHLVKTLERTRVALMVESAEPREVHHFCTLVGFGADAICPYLAIEAIWRLQVDGKIPPKASGDFNSKDELVKKYFKASTYGMMKVLAKMGISTLASYKGAQIFEALGLSSEVIEKCFAGTPSRVEGATFEMLAQDALHLHELAFPSRIFSPGSAEAVALPNPGDYHWRKGGEVHLNDPLAIAKLQEAARTNSVDAYKQYSKTIHELNKACNLRGLLKFKDAASKVPISEVEPASEIVKRFCTGAMSYGSISLEAHTALATAMNTIGGKSNTGEGGEQPSRMEPLADGSRNPKRSAIKQVASGRFGVSSYYLTNADELQIKMAQGAKPGEGGELPGHKVIGDIAITRNSTAGVGLISPPPHHDIYSIEDLAQLIHDLKNANPAARISVKLVSEAGVGVIASGVVKGHAEHVLISGHDGGTGASRWTGIKSAGLPWELGLAETHQTLVANDLRGRTTLQTDGQLKTGRDVAIAALLGAEEYGFSTAPLITLGCIMMRKCHKNTCPVGIATQDPVLREKFAGEPEHVINFFFMVAEEMREIMSQLGFRTVNEMVGRSDMLEVDKEVVKGNAKLENIDLSLLLRPAAELRPEAAQYCVQKQDHGLDMALDNKLISLSNAALEKGLPVYIETPICNTNRAVGTMLSHEVTKRYNLAGLPADTIHIQFTGSAGQSFGAFLCPGITLELEGDSNDYIGKGLSGGKVVVYPPKGSNFDPKDNILIGNVALYGATRGEAYFNGMAAERFCVRNSGALAVVEGVGDHGCEYMTGGTVVVLGKTGRNFAAGMSGGIAYVLDVDGTFQSRCNLELVDLDKVEEEEDIITLRMLIQQHQRHTNSLLAKEVLVDFENLLPKFVKVFPREYKRVLASMKSDAASKDAVERAAEDVDEQDDEAQAVEKDAFEELKKLATASLNEKPSEAPKRPSQVTDAVKHRGFVAYEREGVQYRDPNVRLNDWNEVMMETKPGPLLKTQSARCMDCGTPFCHQENSGCPLGNKIPEFNELVYQNRWQEALERLLETNNFPEFTGRVCPAPCEGSCVLGIIENPVSIKNIECAIIDKAFEEGWMIPRPPVKRTGKRVAIVGSGPSGLAAADQLNKMGHIVTVFERADRIGGLMMYGVPNMKTDKVDIVQRRVNLMAEEGINFVVNANIGLDPLYSLERLREENDAIVLAVGATKPRDLPVPGRELSGVHFAMEFLHANTKSLLDSNLQDGNYISAKGKKVVVIGGGDTGTDCIGTSIRHGCTAVVNLELLPQPPPTRAPGNPWPQWPRIFRVDYGHQEAETKFGKDPRTYEVLTKRFVGDENGVVKGLEVVRVCWEKDETGKFQFKEIEGSEEIIEADLVLLAMGFLGPEATIAEKLGVERDNRSNFKADYGRFSTSVDGVFAAGDCRRGQSLVVWAISEGRQAAAQVDSYLTNEDHGIDGNQDEFVKRQQDLNKKHSKHTVMT.

Residues 1 to 101 constitute an amyloplast transit peptide; sequence MSNSLSLTFT…LYDPAFDKDS (101 aa). C102 (nucleophile) is an active-site residue. Residues 102–503 enclose the Glutamine amidotransferase type-2 domain; sequence CGVGFVAELN…PGMMLLVDFE (402 aa). A disordered region spans residues 1021–1045; the sequence is GGKSNTGEGGEQPSRMEPLADGSRN. Residue 1193–1250 participates in FMN binding; the sequence is LAETHQTLVANDLRGRTTLQTDGQLKTGRDVAIAALLGAEEYGFSTAPLITLGCIMMR. Residues C1246, C1252, and C1257 each coordinate [3Fe-4S] cluster. An NAD(+)-binding site is contributed by 1974 to 1988; sequence GGGDTGTDCIGTSIR.

This sequence belongs to the glutamate synthase family. As to quaternary structure, monomer. [3Fe-4S] cluster is required as a cofactor. FAD serves as cofactor. The cofactor is FMN. As to expression, expressed in infected cells in root nodules. Barely detected in roots and stems.

It is found in the plastid. The protein resides in the amyloplast. It carries out the reaction 2 L-glutamate + NAD(+) = L-glutamine + 2-oxoglutarate + NADH + H(+). Its pathway is amino-acid biosynthesis; L-glutamate biosynthesis via GLT pathway; L-glutamate from 2-oxoglutarate and L-glutamine (NAD(+) route): step 1/1. The protein operates within energy metabolism; nitrogen metabolism. Inhibited by malate, citrate, glutamate, NAD(+) and azaserine, but not by 2-2' dipyridil and N-ethylmaleimide. Required for the assimilation of symbiotically fixed nitrogen into amino acids in root nodules. The protein is Glutamate synthase [NADH], amyloplastic of Medicago sativa (Alfalfa).